The primary structure comprises 140 residues: Large ribosomal subunit protein bL21 (140 aa).

The tract at residues 106–140 is disordered; it reads SGVKPAVGARTKIEPAVKPAKAKKSEAEASAEDAN.

It belongs to the bacterial ribosomal protein bL21 family. In terms of assembly, part of the 50S ribosomal subunit. Contacts protein L20.

Its function is as follows. This protein binds to 23S rRNA in the presence of protein L20. The protein is Large ribosomal subunit protein bL21 of Paracoccus denitrificans (strain Pd 1222).